We begin with the raw amino-acid sequence, 470 residues long: L-seryl-tRNA(Sec) selenium transferase (470 aa).

Lysine 294 bears the N6-(pyridoxal phosphate)lysine mark.

Belongs to the SelA family. The cofactor is pyridoxal 5'-phosphate.

It is found in the cytoplasm. The enzyme catalyses L-seryl-tRNA(Sec) + selenophosphate + H(+) = L-selenocysteinyl-tRNA(Sec) + phosphate. It participates in aminoacyl-tRNA biosynthesis; selenocysteinyl-tRNA(Sec) biosynthesis; selenocysteinyl-tRNA(Sec) from L-seryl-tRNA(Sec) (bacterial route): step 1/1. Functionally, converts seryl-tRNA(Sec) to selenocysteinyl-tRNA(Sec) required for selenoprotein biosynthesis. The chain is L-seryl-tRNA(Sec) selenium transferase from Solidesulfovibrio magneticus (strain ATCC 700980 / DSM 13731 / RS-1) (Desulfovibrio magneticus).